The primary structure comprises 183 residues: Archaemetzincin (183 aa).

A Zn(2+)-binding site is contributed by histidine 132. The Proton acceptor role is filled by glutamate 133. 6 residues coordinate Zn(2+): histidine 136, histidine 142, cysteine 143, cysteine 148, cysteine 167, and cysteine 170.

It belongs to the peptidase M54 family. As to quaternary structure, monomer. It depends on Zn(2+) as a cofactor.

Its function is as follows. Probable zinc metalloprotease whose natural substrate is unknown. This chain is Archaemetzincin, found in Aeropyrum pernix (strain ATCC 700893 / DSM 11879 / JCM 9820 / NBRC 100138 / K1).